Consider the following 267-residue polypeptide: Geranylgeranylglyceryl phosphate synthase (267 aa).

D23 and S52 together coordinate Mg(2+). Sn-glycerol 1-phosphate is bound by residues 173–179 (YLEAGSG), 205–206 (GG), and 227–228 (GT).

It belongs to the GGGP/HepGP synthase family. Group II subfamily. The cofactor is Mg(2+).

Its subcellular location is the cytoplasm. It catalyses the reaction sn-glycerol 1-phosphate + (2E,6E,10E)-geranylgeranyl diphosphate = sn-3-O-(geranylgeranyl)glycerol 1-phosphate + diphosphate. It participates in membrane lipid metabolism; glycerophospholipid metabolism. In terms of biological role, prenyltransferase that catalyzes the transfer of the geranylgeranyl moiety of geranylgeranyl diphosphate (GGPP) to the C3 hydroxyl of sn-glycerol-1-phosphate (G1P). This reaction is the first ether-bond-formation step in the biosynthesis of archaeal membrane lipids. In Caldivirga maquilingensis (strain ATCC 700844 / DSM 13496 / JCM 10307 / IC-167), this protein is Geranylgeranylglyceryl phosphate synthase.